A 252-amino-acid chain; its full sequence is tRNA pseudouridine synthase A (252 aa).

D54 (nucleophile) is an active-site residue. Y113 is a substrate binding site.

This sequence belongs to the tRNA pseudouridine synthase TruA family. In terms of assembly, homodimer.

It catalyses the reaction uridine(38/39/40) in tRNA = pseudouridine(38/39/40) in tRNA. Formation of pseudouridine at positions 38, 39 and 40 in the anticodon stem and loop of transfer RNAs. In Bacteroides fragilis (strain ATCC 25285 / DSM 2151 / CCUG 4856 / JCM 11019 / LMG 10263 / NCTC 9343 / Onslow / VPI 2553 / EN-2), this protein is tRNA pseudouridine synthase A.